A 312-amino-acid polypeptide reads, in one-letter code: DNA-directed RNA polymerase subunit alpha (312 aa).

An alpha N-terminal domain (alpha-NTD) region spans residues 1-229; the sequence is MLQYQIERID…ELFQPLATVT (229 aa). An alpha C-terminal domain (alpha-CTD) region spans residues 240–312; the sequence is PSPEAQIPLE…ISIPQSRTSV (73 aa).

Belongs to the RNA polymerase alpha chain family. As to quaternary structure, in cyanobacteria the RNAP catalytic core is composed of 2 alpha, 1 beta, 1 beta', 1 gamma and 1 omega subunit. When a sigma factor is associated with the core the holoenzyme is formed, which can initiate transcription.

The catalysed reaction is RNA(n) + a ribonucleoside 5'-triphosphate = RNA(n+1) + diphosphate. Functionally, DNA-dependent RNA polymerase catalyzes the transcription of DNA into RNA using the four ribonucleoside triphosphates as substrates. This is DNA-directed RNA polymerase subunit alpha from Prochlorococcus marinus (strain MIT 9301).